Here is a 77-residue protein sequence, read N- to C-terminus: LILVACLMMSCVHCKKDGYPVDWNNCMYDCGYDNAYCEKICKEKGGESGYCYFWKISCYCEGLPDNVEIKGYGRCRG.

The signal sequence occupies residues 1-7 (LILVACL). Positions 16 to 76 (KDGYPVDWNN…VEIKGYGRCR (61 aa)) constitute an LCN-type CS-alpha/beta domain. Disulfide bonds link cysteine 26–cysteine 75, cysteine 30–cysteine 51, cysteine 37–cysteine 58, and cysteine 41–cysteine 60.

The protein belongs to the long (4 C-C) scorpion toxin superfamily. Sodium channel inhibitor family. Alpha subfamily. In terms of tissue distribution, expressed by the venom gland.

The protein resides in the secreted. Its function is as follows. Binds voltage-independently at site-3 of voltage-gated sodium channels (Nav) and inhibits the inactivation of the activated channels, thereby blocking neuronal transmission. The protein is Neurotoxin LmNaTx21.1 of Lychas mucronatus (Chinese swimming scorpion).